The following is a 141-amino-acid chain: Nucleoside diphosphate kinase (141 aa).

Positions 11, 59, 87, 93, 104, and 114 each coordinate ATP. Histidine 117 acts as the Pros-phosphohistidine intermediate in catalysis.

It belongs to the NDK family. Homotetramer. The cofactor is Mg(2+).

The protein resides in the cytoplasm. It catalyses the reaction a 2'-deoxyribonucleoside 5'-diphosphate + ATP = a 2'-deoxyribonucleoside 5'-triphosphate + ADP. The enzyme catalyses a ribonucleoside 5'-diphosphate + ATP = a ribonucleoside 5'-triphosphate + ADP. Major role in the synthesis of nucleoside triphosphates other than ATP. The ATP gamma phosphate is transferred to the NDP beta phosphate via a ping-pong mechanism, using a phosphorylated active-site intermediate. This chain is Nucleoside diphosphate kinase, found in Haemophilus influenzae (strain 86-028NP).